Consider the following 236-residue polypeptide: MRKLTLTLSALALALSLNSVADAKVYMPEKVSDGVTVAQLAEQHAIHWISVEQIEESLKGQPMAVGFDIDDTVLFSSPGFYRGKLEYSPNDYSYLKNPEFWEKMNNEWDKFSMPKKSGMELVQMHLKRGDTVYFITGRSKTKTETVTKYVQEGLRIPADKMNPVIFAGDEEGQNNKVSWMRDHKLKIYYGDADADIAAARELNIRGIRVLRASNSSYQPLPKAGQFGEEVVINSEY.

The N-terminal stretch at 1-23 (MRKLTLTLSALALALSLNSVADA) is a signal peptide. The active-site Nucleophile is the Asp-68. Positions 68 and 70 each coordinate Mg(2+). Asp-70 acts as the Proton donor in catalysis. Residues 136–137 (TG) and Lys-176 each bind substrate. Asp-191 is a Mg(2+) binding site.

Belongs to the class B bacterial acid phosphatase family. As to quaternary structure, homotetramer. Mg(2+) serves as cofactor.

It is found in the periplasm. The enzyme catalyses a phosphate monoester + H2O = an alcohol + phosphate. Activated by ethanol. Also activated by Co(2+), Zn(2+) and glycerol. Inhibited by EDTA, inorganic phosphate, nucleosides and Ca(2+). Unaffected by fluoride and tartrate. Its function is as follows. Dephosphorylates several organic phosphate monoesters including 5'-AMP, 3'-AMP, pNPP, PDP, 5'-UMP, 3'-UMP, G2P, glucose 6-P and ribose 5-P. No activity toward organic phosphate diesters. Also has a phosphotransferase activity catalyzing the transfer of low-energy phosphate groups from organic phosphate monoesters to free hydroxyl groups of various organic compounds. The polypeptide is Class B acid phosphatase (aphA) (Morganella morganii (Proteus morganii)).